The primary structure comprises 494 residues: Sugiol synthase (494 aa).

The helical transmembrane segment at 3–23 (SFSLLAALFFISAATWFISSR) threads the bilayer. Residue Cys-437 coordinates heme.

This sequence belongs to the cytochrome P450 family. It depends on heme as a cofactor. Expressed in roots.

Its subcellular location is the membrane. The catalysed reaction is ferruginol + 2 reduced [NADPH--hemoprotein reductase] + 2 O2 = sugiol + 2 oxidized [NADPH--hemoprotein reductase] + 3 H2O + 2 H(+). The enzyme catalyses ferruginol + reduced [NADPH--hemoprotein reductase] + O2 = 11-hydroxyferruginol + oxidized [NADPH--hemoprotein reductase] + H2O + H(+). It carries out the reaction 11-hydroxyferruginol + 2 reduced [NADPH--hemoprotein reductase] + 2 O2 = 11-hydroxysugiol + 2 oxidized [NADPH--hemoprotein reductase] + 3 H2O + 2 H(+). It participates in secondary metabolite biosynthesis; terpenoid biosynthesis. In terms of biological role, monooxygenase that oxidizes ferruginol to produce sugiol. Oxidizes ferruginol at C-12 to produce 11-hydroxyferruginol. Can oxidize 11-hydroxyferruginol to 11-hydroxysugiol. These products are intermediates in tanshinone biosynthesis. This Salvia miltiorrhiza (Chinese sage) protein is Sugiol synthase.